Here is a 273-residue protein sequence, read N- to C-terminus: Putative pyruvate, phosphate dikinase regulatory protein (273 aa).

149–156 (GPSRTSKT) serves as a coordination point for ADP.

It belongs to the pyruvate, phosphate/water dikinase regulatory protein family. PDRP subfamily.

It catalyses the reaction N(tele)-phospho-L-histidyl/L-threonyl-[pyruvate, phosphate dikinase] + ADP = N(tele)-phospho-L-histidyl/O-phospho-L-threonyl-[pyruvate, phosphate dikinase] + AMP + H(+). The enzyme catalyses N(tele)-phospho-L-histidyl/O-phospho-L-threonyl-[pyruvate, phosphate dikinase] + phosphate + H(+) = N(tele)-phospho-L-histidyl/L-threonyl-[pyruvate, phosphate dikinase] + diphosphate. In terms of biological role, bifunctional serine/threonine kinase and phosphorylase involved in the regulation of the pyruvate, phosphate dikinase (PPDK) by catalyzing its phosphorylation/dephosphorylation. The protein is Putative pyruvate, phosphate dikinase regulatory protein of Rickettsia akari (strain Hartford).